A 395-amino-acid polypeptide reads, in one-letter code: Envelope glycoprotein D (395 aa).

An N-terminal signal peptide occupies residues 1–17; it reads MGSGIAAVLLSLAVALA. The Virion surface segment spans residues 18–342; the sequence is RVPAGEGEYV…PAPAPSGHTG (325 aa). Zn(2+) is bound at residue H63. Disulfide bonds link C90-C214, C131-C227, and C143-C152. An N-linked (GlcNAc...) asparagine; by host glycan is attached at N119. D240 serves as a coordination point for Zn(2+). Residues 261–306 are profusion; the sequence is LQAAGWHGPKAPFTSTLLPPEVVETANVTRPELAPEERGTSRTPGD. Residue N287 is glycosylated (N-linked (GlcNAc...) asparagine; by host). Residues 289-314 are disordered; that stretch reads TRPELAPEERGTSRTPGDEPAPAVAA. A helical transmembrane segment spans residues 343-362; that stretch reads AVVGALAGAGLAAGVVVLAV. Residues 363–395 lie on the Intravirion side of the membrane; it reads YLVRRRGRAAGKHVRLPELLEEAHGPARRGAPY.

The protein belongs to the herpesviridae glycoprotein D family.

The protein localises to the virion membrane. Functionally, envelope glycoprotein that binds to host cell entry receptors, promoting the virus entry into host cells. May trigger fusion with host membrane, by recruiting the fusion machinery composed of gB and gH/gL. In Cercopithecine herpesvirus 1 (CeHV-1), this protein is Envelope glycoprotein D (gD).